The following is a 425-amino-acid chain: MGEDAAQAEKFQHPGSDMRQEKPSSPSPMPSSTPSPSLNLGNTEEAIRDNSQVNAVTVLTLLDKLVNMLDAVQENQHKMEQRQISLEGSVKGIQNDLTKLSKYQASTSNTVSKLLEKSRKVSAHTRAVKERMDRQCAQVKRLENNHAQLLRRNHFKVLIFQEENEIPASVFVKQPVSGAVEGKEELPDENKSLEETLHTVDLSSDDDLPHDEEALEDSAEEKVEESRAEKIKRSSLKKVDSLKKAFSRQNIEKKMNKLGTKIVSVERREKIKKSLTSNHQKISSGKSSPFKVSPLTFGRKKVREGESHAENETKSEDLPSSEQMPNDQEEESFAEGHSEASLASALVEGEIAEEAAEKATSRGSNSGMDSNIDLTIVEDEEEESVALEQAQKVRYEGSYALTSEEAERSDGDPVQPAVLQVHQTS.

The segment at 1–42 (MGEDAAQAEKFQHPGSDMRQEKPSSPSPMPSSTPSPSLNLGN) is disordered. G2 bears the N-acetylglycine mark. Residues 2-168 (GEDAAQAEKF…IFQEENEIPA (167 aa)) form an interaction with CAVIN1 region. Positions 10–22 (KFQHPGSDMRQEK) are enriched in basic and acidic residues. Phosphoserine occurs at positions 27, 35, 37, and 51. Coiled coils occupy residues 61–82 (LLDK…MEQR) and 125–154 (TRAV…RRNH). Residues 62–100 (LDKLVNMLDAVQENQHKMEQRQISLEGSVKGIQNDLTKL) form a leucine-zipper region. Phosphothreonine is present on residues T196 and T199. Disordered regions lie at residues 199 to 234 (TVDL…IKRS) and 271 to 425 (IKKS…HQTS). Phosphoserine occurs at positions 203, 204, and 218. Positions 203-219 (SSDDDLPHDEEALEDSA) are enriched in acidic residues. Residues 210–268 (HDEEALEDSAEEKVEESRAEKIKRSSLKKVDSLKKAFSRQNIEKKMNKLGTKIVSVERR) adopt a coiled-coil conformation. Residues 220–234 (EEKVEESRAEKIKRS) show a composition bias toward basic and acidic residues. Over residues 274-287 (SLTSNHQKISSGKS) the composition is skewed to polar residues. 5 positions are modified to phosphoserine: S283, S284, S287, S288, and S293. The span at 303 to 317 (REGESHAENETKSED) shows a compositional bias: basic and acidic residues. Residues S332, S341, S366, and S370 each carry the phosphoserine modification. T375 is modified (phosphothreonine). The span at 376–385 (IVEDEEEESV) shows a compositional bias: acidic residues. Y395 carries the post-translational modification Phosphotyrosine. Phosphoserine is present on S403.

Belongs to the CAVIN family. In terms of assembly, component of the CAVIN complex composed of CAVIN1, CAVIN2, CAVIN3 and CAVIN4. Binds to PRKCA in the presence of phosphatidylserine. Interacts with CAVIN4; this augments the transactivation of NPPA by CAVIN4. Interacts with CAVIN1. Interacts with CAV3. Post-translationally, phosphorylated on Ser residues. As to expression, highly expressed in heart and lung, and expressed at lower levels in brain, kidney, liver, pancreas, placenta, and skeletal muscle.

The protein resides in the cytoplasm. The protein localises to the cytosol. Its subcellular location is the membrane. It localises to the caveola. Functionally, plays an important role in caveolar biogenesis and morphology. Regulates caveolae morphology by inducing membrane curvature within caveolae. Plays a role in caveola formation in a tissue-specific manner. Required for the formation of caveolae in the lung and fat endothelia but not in the heart endothelia. Negatively regulates the size or stability of CAVIN complexes in the lung endothelial cells. May play a role in targeting PRKCA to caveolae. The polypeptide is Caveolae-associated protein 2 (Homo sapiens (Human)).